The sequence spans 1032 residues: GPI inositol-deacylase (1032 aa).

N12 is a glycosylation site (N-linked (GlcNAc...) asparagine). The helical transmembrane segment at 15–35 (ILTLVSFFGLVLFYLTWYLYT) threads the bilayer. S195 is a catalytic residue. N-linked (GlcNAc...) asparagine glycans are attached at residues N520 and N555. 2 consecutive transmembrane segments (helical) span residues 703–723 (LATI…QVKH) and 740–760 (ICSP…TPIM). N-linked (GlcNAc...) asparagine glycosylation occurs at N784. 3 helical membrane passes run 805–825 (LWFI…LTFY), 861–880 (WANR…PIYM), and 884–903 (FAYV…ILVA). N-linked (GlcNAc...) asparagine glycosylation occurs at N907. The chain crosses the membrane as a helical span at residues 916-936 (SLLMLMLWVLPINVPILVVFV). N-linked (GlcNAc...) asparagine glycosylation is found at N938 and N942. Helical transmembrane passes span 943–963 (WTTP…ILLM) and 985–1005 (AFLA…TYWI).

Belongs to the GPI inositol-deacylase family.

The protein localises to the endoplasmic reticulum membrane. In terms of biological role, involved in inositol deacylation of GPI-anchored proteins which plays important roles in the quality control and ER-associated degradation of GPI-anchored proteins. The sequence is that of GPI inositol-deacylase (BST1) from Debaryomyces hansenii (strain ATCC 36239 / CBS 767 / BCRC 21394 / JCM 1990 / NBRC 0083 / IGC 2968) (Yeast).